The primary structure comprises 317 residues: Serpentine receptor class delta-46 (317 aa).

The next 7 membrane-spanning stretches (helical) occupy residues F9 to I29, I42 to A62, Y91 to V111, V129 to I149, Q185 to L205, A239 to T259, and F269 to V289.

Belongs to the nematode receptor-like protein srd family.

The protein localises to the membrane. In Caenorhabditis elegans, this protein is Serpentine receptor class delta-46 (srd-46).